A 656-amino-acid polypeptide reads, in one-letter code: Choline transporter-like protein 3 (656 aa).

Residues 37-57 (WLVLFFLFWTGLVFIMGYSVV) traverse the membrane as a helical segment. Residues N141 and N154 are each glycosylated (N-linked (GlcNAc...) asparagine). Helical transmembrane passes span 216-236 (DTILGLCVFTFALSLAMLFAF), 242-262 (LLIHIIISLVILGLLFVCGVL), 288-308 (LAFAIISTVVTVLLLALIFTL), 337-357 (LWTCAILIFFWVLWVAVLLSL), and 381-401 (YMWWYHLIGLIWTSEFILACQ). 2 N-linked (GlcNAc...) asparagine glycosylation sites follow: N506 and N524. Residues 537-557 (FVIFLGKVLVVCFSIFGGLMA) form a helical membrane-spanning segment. N-linked (GlcNAc...) asparagine glycosylation is present at N559. A helical transmembrane segment spans residues 566 to 586 (VWAIPLLLVAFFACVVAHSFL). The interval 634–656 (AKSQGQKDALPNEEGTELQPIVR) is disordered.

It belongs to the CTL (choline transporter-like) family.

The protein localises to the membrane. The polypeptide is Choline transporter-like protein 3 (Slc44a3) (Mus musculus (Mouse)).